Consider the following 283-residue polypeptide: Pantothenate synthetase (283 aa).

31-38 provides a ligand contact to ATP; that stretch reads MGALHDGH. The active-site Proton donor is His-38. (R)-pantoate is bound at residue Gln-62. Gln-62 is a beta-alanine binding site. 148 to 151 serves as a coordination point for ATP; the sequence is GKKD. Gln-154 serves as a coordination point for (R)-pantoate. ATP contacts are provided by residues Ile-177 and 185-188; that span reads KSSR.

It belongs to the pantothenate synthetase family. In terms of assembly, homodimer.

The protein localises to the cytoplasm. It catalyses the reaction (R)-pantoate + beta-alanine + ATP = (R)-pantothenate + AMP + diphosphate + H(+). It participates in cofactor biosynthesis; (R)-pantothenate biosynthesis; (R)-pantothenate from (R)-pantoate and beta-alanine: step 1/1. Its function is as follows. Catalyzes the condensation of pantoate with beta-alanine in an ATP-dependent reaction via a pantoyl-adenylate intermediate. This is Pantothenate synthetase from Oceanobacillus iheyensis (strain DSM 14371 / CIP 107618 / JCM 11309 / KCTC 3954 / HTE831).